The primary structure comprises 238 residues: MTDATDPGALSAALAAALYRLMTWLSPSFPVGAFAYSSGLEWAVEAGDIKDAATLTDWLSAMLSDGAGFCDGVVLAQAYRAASAGDDARLRAVADLACAMVPSRERHLETTTQGRAFVEIASHAWSSARLPPAIAACGGAMAYPVAVGIVSAAHEVPLAAVLHAFLHALVSNWISAAARLVPLGQTDSQRVLAALEPVVAPTAARALAASLDDLGSATFRADLASLRHESQYTRLFRS.

This sequence belongs to the UreF family. As to quaternary structure, ureD, UreF and UreG form a complex that acts as a GTP-hydrolysis-dependent molecular chaperone, activating the urease apoprotein by helping to assemble the nickel containing metallocenter of UreC. The UreE protein probably delivers the nickel.

It localises to the cytoplasm. Its function is as follows. Required for maturation of urease via the functional incorporation of the urease nickel metallocenter. This Rhodopseudomonas palustris (strain BisA53) protein is Urease accessory protein UreF.